Consider the following 276-residue polypeptide: Sulfur carrier protein FdhD (276 aa).

Cysteine 122 (cysteine persulfide intermediate) is an active-site residue. 259–264 lines the Mo-bis(molybdopterin guanine dinucleotide) pocket; it reads FCKPGK.

The protein belongs to the FdhD family.

Its subcellular location is the cytoplasm. Functionally, required for formate dehydrogenase (FDH) activity. Acts as a sulfur carrier protein that transfers sulfur from IscS to the molybdenum cofactor prior to its insertion into FDH. The polypeptide is Sulfur carrier protein FdhD (Photorhabdus laumondii subsp. laumondii (strain DSM 15139 / CIP 105565 / TT01) (Photorhabdus luminescens subsp. laumondii)).